The chain runs to 340 residues: Mitotic checkpoint protein BUB3.1 (340 aa).

Residues 1 to 20 form a disordered region; it reads MTTVTPSAGRELSNPPSDGI. WD repeat units follow at residues 15 to 54, 96 to 135, 142 to 179, 239 to 278, and 281 to 324; these read PPSDGISNLRFSNNSDHLLVSSWDKRVRLYDVSTNSLKGE, THDKAVRCVEYSYAAGQVITGSWDKTVKCWDPRGASGPER, LQPERVYSMSLVGHRLVVATAGRHVNIYDLRNMSQPEQ, DIVYPVNSIAFHPIYGTFATGGCDGFVNIWDGNNKKRLYQ, and KYPT…RSVN.

This sequence belongs to the WD repeat BUB3 family. As to quaternary structure, part of the mitotic checkpoint complex (MCC); interacts with CDC20-1 and CDC20-2. Interacts with MAD2 and BUBR1. Expressed in actively dividing tissues, early in organ development, in young leaves, lateral root primordia and root meristems, flower buds, flowers and siliques.

It localises to the nucleus. Its subcellular location is the chromosome. It is found in the centromere. The protein resides in the kinetochore. The protein localises to the cytoplasm. It localises to the cytoskeleton. Its subcellular location is the phragmoplast. It is found in the spindle. Functionally, has a dual function in spindle-assembly checkpoint signaling and in promoting the establishment of correct kinetochore-microtubule (K-MT) attachments. Promotes the formation of stable end-on bipolar attachments. Necessary for kinetochore localization of BUB1. The BUB1/BUB3 complex plays a role in the inhibition of anaphase-promoting complex or cyclosome (APC/C) when spindle-assembly checkpoint is activated and inhibits the ubiquitin ligase activity of APC/C by phosphorylating its activator CDC20. Essential for gametophyte development. The chain is Mitotic checkpoint protein BUB3.1 (BUB3.1) from Arabidopsis thaliana (Mouse-ear cress).